The following is a 223-amino-acid chain: Ribonuclease T (223 aa).

An Exonuclease domain is found at 20–194 (VVIDVETAGF…YDTERTAELF (175 aa)). 4 residues coordinate Mg(2+): aspartate 23, glutamate 25, histidine 181, and aspartate 186. Catalysis depends on histidine 181, which acts as the Proton donor/acceptor.

It belongs to the RNase T family. As to quaternary structure, homodimer. Mg(2+) is required as a cofactor.

Its function is as follows. Trims short 3' overhangs of a variety of RNA species, leaving a one or two nucleotide 3' overhang. Responsible for the end-turnover of tRNA: specifically removes the terminal AMP residue from uncharged tRNA (tRNA-C-C-A). Also appears to be involved in tRNA biosynthesis. The chain is Ribonuclease T from Shewanella sp. (strain W3-18-1).